A 419-amino-acid chain; its full sequence is Gamma-glutamyl phosphate reductase (419 aa).

The protein belongs to the gamma-glutamyl phosphate reductase family.

The protein localises to the cytoplasm. The catalysed reaction is L-glutamate 5-semialdehyde + phosphate + NADP(+) = L-glutamyl 5-phosphate + NADPH + H(+). The protein operates within amino-acid biosynthesis; L-proline biosynthesis; L-glutamate 5-semialdehyde from L-glutamate: step 2/2. Functionally, catalyzes the NADPH-dependent reduction of L-glutamate 5-phosphate into L-glutamate 5-semialdehyde and phosphate. The product spontaneously undergoes cyclization to form 1-pyrroline-5-carboxylate. This chain is Gamma-glutamyl phosphate reductase, found in Yersinia pestis.